Reading from the N-terminus, the 99-residue chain is NADH-quinone oxidoreductase subunit K (99 aa).

The next 3 helical transmembrane spans lie at 3-23, 28-48, and 59-79; these read PANY…GVLL, IVMF…FVTF, and MIAF…LAII.

The protein belongs to the complex I subunit 4L family. In terms of assembly, NDH-1 is composed of 14 different subunits. Subunits NuoA, H, J, K, L, M, N constitute the membrane sector of the complex.

The protein localises to the cell membrane. The enzyme catalyses a quinone + NADH + 5 H(+)(in) = a quinol + NAD(+) + 4 H(+)(out). Its function is as follows. NDH-1 shuttles electrons from NADH, via FMN and iron-sulfur (Fe-S) centers, to quinones in the respiratory chain. The immediate electron acceptor for the enzyme in this species is believed to be a menaquinone. Couples the redox reaction to proton translocation (for every two electrons transferred, four hydrogen ions are translocated across the cytoplasmic membrane), and thus conserves the redox energy in a proton gradient. In Mycobacterium bovis (strain ATCC BAA-935 / AF2122/97), this protein is NADH-quinone oxidoreductase subunit K.